A 71-amino-acid chain; its full sequence is ATP synthase subunit c (71 aa).

2 helical membrane passes run 5 to 25 (AIGI…AIIV) and 47 to 67 (FIGA…AFLL).

The protein belongs to the ATPase C chain family. As to quaternary structure, F-type ATPases have 2 components, F(1) - the catalytic core - and F(0) - the membrane proton channel. F(1) has five subunits: alpha(3), beta(3), gamma(1), delta(1), epsilon(1). F(0) has three main subunits: a(1), b(2) and c(10-14). The alpha and beta chains form an alternating ring which encloses part of the gamma chain. F(1) is attached to F(0) by a central stalk formed by the gamma and epsilon chains, while a peripheral stalk is formed by the delta and b chains.

It localises to the cell membrane. F(1)F(0) ATP synthase produces ATP from ADP in the presence of a proton or sodium gradient. F-type ATPases consist of two structural domains, F(1) containing the extramembraneous catalytic core and F(0) containing the membrane proton channel, linked together by a central stalk and a peripheral stalk. During catalysis, ATP synthesis in the catalytic domain of F(1) is coupled via a rotary mechanism of the central stalk subunits to proton translocation. Functionally, key component of the F(0) channel; it plays a direct role in translocation across the membrane. A homomeric c-ring of between 10-14 subunits forms the central stalk rotor element with the F(1) delta and epsilon subunits. The polypeptide is ATP synthase subunit c (Shouchella clausii (strain KSM-K16) (Alkalihalobacillus clausii)).